A 338-amino-acid chain; its full sequence is Tetraacyldisaccharide 4'-kinase (338 aa).

61-68 (TLGGTGKT) contributes to the ATP binding site.

The protein belongs to the LpxK family.

The catalysed reaction is a lipid A disaccharide + ATP = a lipid IVA + ADP + H(+). Its pathway is glycolipid biosynthesis; lipid IV(A) biosynthesis; lipid IV(A) from (3R)-3-hydroxytetradecanoyl-[acyl-carrier-protein] and UDP-N-acetyl-alpha-D-glucosamine: step 6/6. Functionally, transfers the gamma-phosphate of ATP to the 4'-position of a tetraacyldisaccharide 1-phosphate intermediate (termed DS-1-P) to form tetraacyldisaccharide 1,4'-bis-phosphate (lipid IVA). The chain is Tetraacyldisaccharide 4'-kinase from Nitrosococcus oceani (strain ATCC 19707 / BCRC 17464 / JCM 30415 / NCIMB 11848 / C-107).